A 296-amino-acid chain; its full sequence is Light-independent protochlorophyllide reductase iron-sulfur ATP-binding protein (296 aa).

Residues 10–15 (GIGKST) and Lys-39 contribute to the ATP site. Ser-14 contacts Mg(2+). [4Fe-4S] cluster is bound by residues Cys-95 and Cys-129. 180–181 (NR) contacts ATP.

It belongs to the NifH/BchL/ChlL family. In terms of assembly, homodimer. Protochlorophyllide reductase is composed of three subunits; ChlL, ChlN and ChlB. [4Fe-4S] cluster is required as a cofactor.

The protein resides in the plastid. The protein localises to the chloroplast. The catalysed reaction is chlorophyllide a + oxidized 2[4Fe-4S]-[ferredoxin] + 2 ADP + 2 phosphate = protochlorophyllide a + reduced 2[4Fe-4S]-[ferredoxin] + 2 ATP + 2 H2O. It participates in porphyrin-containing compound metabolism; chlorophyll biosynthesis (light-independent). Functionally, component of the dark-operative protochlorophyllide reductase (DPOR) that uses Mg-ATP and reduced ferredoxin to reduce ring D of protochlorophyllide (Pchlide) to form chlorophyllide a (Chlide). This reaction is light-independent. The L component serves as a unique electron donor to the NB-component of the complex, and binds Mg-ATP. This chain is Light-independent protochlorophyllide reductase iron-sulfur ATP-binding protein, found in Mesostigma viride (Green alga).